The chain runs to 214 residues: tRNA (guanine-N(7)-)-methyltransferase (214 aa).

Residues D35, E60, N87, and D113 each coordinate S-adenosyl-L-methionine. The active site involves D113. Residues K117 and D149 each coordinate substrate.

Belongs to the class I-like SAM-binding methyltransferase superfamily. TrmB family.

The enzyme catalyses guanosine(46) in tRNA + S-adenosyl-L-methionine = N(7)-methylguanosine(46) in tRNA + S-adenosyl-L-homocysteine. It participates in tRNA modification; N(7)-methylguanine-tRNA biosynthesis. Its function is as follows. Catalyzes the formation of N(7)-methylguanine at position 46 (m7G46) in tRNA. This is tRNA (guanine-N(7)-)-methyltransferase from Prochlorococcus marinus (strain NATL2A).